The primary structure comprises 440 residues: Thymidine phosphorylase (440 aa).

Belongs to the thymidine/pyrimidine-nucleoside phosphorylase family. As to quaternary structure, homodimer.

The enzyme catalyses thymidine + phosphate = 2-deoxy-alpha-D-ribose 1-phosphate + thymine. It functions in the pathway pyrimidine metabolism; dTMP biosynthesis via salvage pathway; dTMP from thymine: step 1/2. Functionally, the enzymes which catalyze the reversible phosphorolysis of pyrimidine nucleosides are involved in the degradation of these compounds and in their utilization as carbon and energy sources, or in the rescue of pyrimidine bases for nucleotide synthesis. The protein is Thymidine phosphorylase of Yersinia enterocolitica serotype O:8 / biotype 1B (strain NCTC 13174 / 8081).